The sequence spans 301 residues: Probable splicing factor ECU05_1440 (301 aa).

The RRM 1 domain maps to 1 to 70 (MQIFIGKIPN…APISVERANG (70 aa)). Disordered stretches follow at residues 106-140 (PPMR…SFRM) and 255-301 (SKDE…AEND). Basic and acidic residues-rich tracts occupy residues 110-140 (YESR…SFRM) and 255-270 (SKDE…HMRS). The RRM 2 domain maps to 182–255 (LKVVFENIAP…HILKTRSYLS (74 aa)).

This sequence belongs to the splicing factor SR family.

The protein localises to the nucleus. Functionally, plays a role in splicing. This chain is Probable splicing factor ECU05_1440, found in Encephalitozoon cuniculi (strain GB-M1) (Microsporidian parasite).